Here is a 426-residue protein sequence, read N- to C-terminus: MFGRNFPFFNSIGGFYPRESLDSKRPSGSGYTSKVRVRDKYHIVGFISSGTYGRVYKAIGKDGRKGEYAIKKFKPDKEGEIIQYTGLSQSAIREMALCSELDHPNVVQLAEIILEDKCIFMVFEYTEHDLLQIIHHHTQPQRHAIPAPMIKSILFQLLNGLLYLHTNWVLHRDLKPANILVTSSGAVRIGDLGLARLFYKPLNSLYSGDKVVVTIWYRAPELLMGSRHYTPAVDLWAVGCIFAELLSLRPIFKGEEAKMDSKKTVPFQRNQMMKIIDIMGLPRKETWPGLVSMPEFSQLQSLAMSRGYINRQCNLEGWYQSCLKNNGYSPGSAAGTPGAEGFDLLSRLLEYDPTKRISAREALEHPYFTTGTPVTANCFAGYEGKYPHRRVTQDDNDIRSGSLPGTKRSGLPDDSLMGRAAKRLKE.

Residues 41–368 (YHIVGFISSG…AREALEHPYF (328 aa)) enclose the Protein kinase domain. ATP is bound by residues 47 to 55 (ISSGTYGRV) and Lys-71. The Proton acceptor role is filled by Asp-173. The tract at residues 390–426 (RVTQDDNDIRSGSLPGTKRSGLPDDSLMGRAAKRLKE) is disordered.

This sequence belongs to the protein kinase superfamily. CMGC Ser/Thr protein kinase family. CDC2/CDKX subfamily. In terms of assembly, component of the srb8-11 complex, a regulatory module of the Mediator complex. Mg(2+) serves as cofactor.

It localises to the nucleus. The enzyme catalyses L-seryl-[protein] + ATP = O-phospho-L-seryl-[protein] + ADP + H(+). It carries out the reaction L-threonyl-[protein] + ATP = O-phospho-L-threonyl-[protein] + ADP + H(+). It catalyses the reaction [DNA-directed RNA polymerase] + ATP = phospho-[DNA-directed RNA polymerase] + ADP + H(+). Functionally, component of the srb8-11 complex. The srb8-11 complex is a regulatory module of the Mediator complex which is itself involved in regulation of basal and activated RNA polymerase II-dependent transcription. The srb8-11 complex may be involved in the transcriptional repression of a subset of genes regulated by Mediator. It may inhibit the association of the Mediator complex with RNA polymerase II to form the holoenzyme complex. The srb8-11 complex phosphorylates the C-terminal domain (CTD) of the largest subunit of RNA polymerase II. The chain is Serine/threonine-protein kinase ssn3 (ssn3) from Aspergillus fumigatus (strain ATCC MYA-4609 / CBS 101355 / FGSC A1100 / Af293) (Neosartorya fumigata).